Consider the following 527-residue polypeptide: Bifunctional methyltransferase (527 aa).

The hemK stretch occupies residues 1-309 (MQYSIKQVLS…GHSRVILFSP (309 aa)). Positions 1 to 311 (MQYSIKQVLS…SRVILFSPIN (311 aa)) are RF MTase. S-adenosyl-L-methionine contacts are provided by residues 149–153 (GTGSG), Asp-172, Trp-201, Asn-216, Glu-356, Glu-381, Asn-408, and Asp-430. 216 to 219 (NPPY) contacts substrate. Residues 310-527 (INLNRSYARR…IILQHVSGDH (218 aa)) form a tRNA (guanine-N(7)-)-methyltransferase region. Residues 314 to 527 (RSYARRIGKS…IILQHVSGDH (214 aa)) form a tRNA MTase region. Asp-430 is a catalytic residue. Residues Lys-434 and Asp-466 each contribute to the substrate site.

It in the C-terminal section; belongs to the class I-like SAM-binding methyltransferase superfamily. TrmB family. The protein in the N-terminal section; belongs to the protein N5-glutamine methyltransferase family. PrmC subfamily.

It catalyses the reaction L-glutaminyl-[peptide chain release factor] + S-adenosyl-L-methionine = N(5)-methyl-L-glutaminyl-[peptide chain release factor] + S-adenosyl-L-homocysteine + H(+). The catalysed reaction is guanosine(46) in tRNA + S-adenosyl-L-methionine = N(7)-methylguanosine(46) in tRNA + S-adenosyl-L-homocysteine. In terms of biological role, methylates the class 1 translation termination release factors RF1/PrfA and RF2/PrfB on the glutamine residue of the universally conserved GGQ motif. Its function is as follows. Catalyzes the formation of N(7)-methylguanine at position 46 (m7G46) in tRNA. This chain is Bifunctional methyltransferase (prmC/trmB), found in Rickettsia felis (strain ATCC VR-1525 / URRWXCal2) (Rickettsia azadi).